The sequence spans 250 residues: MRVDLNCDLGEAFGNYSFGGDHQIIPLITSANVACGFHAGDENVMNETVKLAKAHNVAVGAHPGLPDLKGFGRRNIDISNDEIYNLMIYQLGALQGFCRIHQVKINHVKPHGALYQMGAKDREIASVIAQAVYDFDPSLVLVGLANSYLISEAKNVGLITASEVFADRRYEDDGQLVSRKESDAVITDTDEALKQVLKMVKENKVISKNNKEVTLQADTICVHGDGEHALLFVSKIREILMKEGIDIQSL.

This sequence belongs to the LamB/PxpA family. In terms of assembly, forms a complex composed of PxpA, PxpB and PxpC.

It catalyses the reaction 5-oxo-L-proline + ATP + 2 H2O = L-glutamate + ADP + phosphate + H(+). Functionally, catalyzes the cleavage of 5-oxoproline to form L-glutamate coupled to the hydrolysis of ATP to ADP and inorganic phosphate. This chain is 5-oxoprolinase subunit A, found in Staphylococcus aureus (strain MW2).